Reading from the N-terminus, the 471-residue chain is ATP synthase subunit beta (471 aa).

Glycine 153–threonine 160 serves as a coordination point for ATP.

The protein belongs to the ATPase alpha/beta chains family. As to quaternary structure, F-type ATPases have 2 components, CF(1) - the catalytic core - and CF(0) - the membrane proton channel. CF(1) has five subunits: alpha(3), beta(3), gamma(1), delta(1), epsilon(1). CF(0) has four main subunits: a(1), b(1), b'(1) and c(9-12).

The protein resides in the cell membrane. The catalysed reaction is ATP + H2O + 4 H(+)(in) = ADP + phosphate + 5 H(+)(out). Functionally, produces ATP from ADP in the presence of a proton gradient across the membrane. The catalytic sites are hosted primarily by the beta subunits. The sequence is that of ATP synthase subunit beta from Chloroflexus aggregans (strain MD-66 / DSM 9485).